The primary structure comprises 264 residues: Thymidylate synthase (264 aa).

DUMP is bound by residues Arg-21 and 126-127; that span reads RR. The active-site Nucleophile is Cys-146. DUMP contacts are provided by residues 166–169, Asn-177, and 207–209; these read RSAD and HLY. Position 169 (Asp-169) interacts with (6R)-5,10-methylene-5,6,7,8-tetrahydrofolate. Position 263 (Ala-263) interacts with (6R)-5,10-methylene-5,6,7,8-tetrahydrofolate.

Belongs to the thymidylate synthase family. Bacterial-type ThyA subfamily. As to quaternary structure, homodimer.

It localises to the cytoplasm. The enzyme catalyses dUMP + (6R)-5,10-methylene-5,6,7,8-tetrahydrofolate = 7,8-dihydrofolate + dTMP. It functions in the pathway pyrimidine metabolism; dTTP biosynthesis. In terms of biological role, catalyzes the reductive methylation of 2'-deoxyuridine-5'-monophosphate (dUMP) to 2'-deoxythymidine-5'-monophosphate (dTMP) while utilizing 5,10-methylenetetrahydrofolate (mTHF) as the methyl donor and reductant in the reaction, yielding dihydrofolate (DHF) as a by-product. This enzymatic reaction provides an intracellular de novo source of dTMP, an essential precursor for DNA biosynthesis. This chain is Thymidylate synthase, found in Afipia carboxidovorans (strain ATCC 49405 / DSM 1227 / KCTC 32145 / OM5) (Oligotropha carboxidovorans).